Consider the following 428-residue polypeptide: MAASAIFLMDSKGKVLISRNYRGDVPMSVASKFISKILEEEDLNLKPIIQEDGISYIYVKHNNLFLLATTERNANAATILLFLYKMIEVFNEYFKELEEESIRDNFVVIYELMDEMMDFGYPQSTEPKILQEYITQEGYKLERGARGMVLPAAITGAVSWRKEGIKYNKNEVFLDVVESINLLVSANGTVLRSEIVGAVKMKSKLSGMPELRLGLNDKILFENSAKTGAPKGKGVELEDVKFHQCVRLSKFENDRTISFIPPDGEFELMSYRLNTTVKPLIWVECISDTHAHSRVEYMVKAKSQFKGKSIANNVEIIVPVPPDADTPKFRCTVGTCKYAPEKDAIIWTIKQFPGGGREFLMRAHFGLPSISDEKPATKPPIMVKFEIPYYTVSGIQVRYLKIIEKSGYQALPWVRYVCLSGDYQFRTS.

Alanine 2 bears the N-acetylalanine; partial mark. Positions 169-426 (KNEVFLDVVE…VCLSGDYQFR (258 aa)) constitute an MHD domain.

This sequence belongs to the adaptor complexes medium subunit family. Adaptor protein complex 1 (AP-1) is a heterotetramer composed of two large adaptins (gamma-type subunit and beta-type subunit), a medium adaptin (mu-type subunit) and a small adaptin (sigma-type subunit).

The protein localises to the golgi apparatus. Its subcellular location is the trans-Golgi network. The protein resides in the cytoplasmic vesicle. It is found in the clathrin-coated vesicle membrane. Its function is as follows. Subunit of clathrin-associated adaptor protein complex 1 that plays a role in protein sorting in the trans-Golgi network (TGN) and endosomes. The AP complexes mediate the recruitment of clathrin to membranes and the recognition of sorting signals within the cytosolic tails of transmembrane cargo molecules. Also involved in early steps of phagocytosis and macropinocytosis. The chain is AP-1 complex subunit mu (apm1) from Dictyostelium discoideum (Social amoeba).